The following is a 196-amino-acid chain: DnaA initiator-associating protein DiaA (196 aa).

Residues 34–196 (LVQSLLNGNK…DNTLFPHQDV (163 aa)) enclose the SIS domain.

This sequence belongs to the SIS family. DiaA subfamily. Homotetramer; dimer of dimers.

Required for the timely initiation of chromosomal replication via direct interactions with the DnaA initiator protein. The polypeptide is DnaA initiator-associating protein DiaA (Escherichia coli O6:K15:H31 (strain 536 / UPEC)).